Reading from the N-terminus, the 379-residue chain is Probable tRNA sulfurtransferase (379 aa).

The 106-residue stretch at 52–157 (DEFLDKLKFI…RHHAFVFCKI (106 aa)) folds into the THUMP domain. ATP contacts are provided by residues 175–176 (LL), Arg-257, Gly-279, and Gln-288.

This sequence belongs to the ThiI family.

It localises to the cytoplasm. The catalysed reaction is [ThiI sulfur-carrier protein]-S-sulfanyl-L-cysteine + a uridine in tRNA + 2 reduced [2Fe-2S]-[ferredoxin] + ATP + H(+) = [ThiI sulfur-carrier protein]-L-cysteine + a 4-thiouridine in tRNA + 2 oxidized [2Fe-2S]-[ferredoxin] + AMP + diphosphate. It catalyses the reaction [ThiS sulfur-carrier protein]-C-terminal Gly-Gly-AMP + S-sulfanyl-L-cysteinyl-[cysteine desulfurase] + AH2 = [ThiS sulfur-carrier protein]-C-terminal-Gly-aminoethanethioate + L-cysteinyl-[cysteine desulfurase] + A + AMP + 2 H(+). Its pathway is cofactor biosynthesis; thiamine diphosphate biosynthesis. In terms of biological role, catalyzes the ATP-dependent transfer of a sulfur to tRNA to produce 4-thiouridine in position 8 of tRNAs, which functions as a near-UV photosensor. Also catalyzes the transfer of sulfur to the sulfur carrier protein ThiS, forming ThiS-thiocarboxylate. This is a step in the synthesis of thiazole, in the thiamine biosynthesis pathway. The sulfur is donated as persulfide by IscS. The protein is Probable tRNA sulfurtransferase of Mycoplasmopsis pulmonis (strain UAB CTIP) (Mycoplasma pulmonis).